The chain runs to 387 residues: Na(+)/H(+) antiporter NhaA (387 aa).

Helical transmembrane passes span 16-36 (AGGV…NSSI), 53-73 (IEHY…GLEL), 89-109 (LLPI…HMFF), 118-138 (GSGI…SLLG), 147-167 (VFLT…IAIF), 171-191 (GIDV…FILN), 197-217 (ILWP…HSGV), 220-240 (TITG…PDSI), 251-271 (PVAF…IIDS), 283-303 (IGIF…FCAI), 321-341 (VIGV…ITLL), and 354-374 (IAIM…LKMT).

It belongs to the NhaA Na(+)/H(+) (TC 2.A.33) antiporter family.

Its subcellular location is the cell inner membrane. The enzyme catalyses Na(+)(in) + 2 H(+)(out) = Na(+)(out) + 2 H(+)(in). Its function is as follows. Na(+)/H(+) antiporter that extrudes sodium in exchange for external protons. The polypeptide is Na(+)/H(+) antiporter NhaA (Cytophaga hutchinsonii (strain ATCC 33406 / DSM 1761 / CIP 103989 / NBRC 15051 / NCIMB 9469 / D465)).